The primary structure comprises 652 residues: Carboxypeptidase Z (652 aa).

Positions 1 to 18 (MPPPLPLLLLTVLVVAAA) are cleaved as a signal peptide. The region spanning 27–160 (NPAGECHRPP…TREDEGCYDP (134 aa)) is the FZ domain. Disulfide bonds link Cys43/Cys109, Cys51/Cys102, Cys93/Cys129, Cys118/Cys157, and Cys122/Cys146. The Peptidase M14 domain occupies 186–502 (SHHSYAQMVR…ESLLNFVETV (317 aa)). 2 residues coordinate Zn(2+): His248 and Glu251. An N-linked (GlcNAc...) asparagine glycan is attached at Asn281. Position 380 (His380) interacts with Zn(2+). The active-site Proton donor/acceptor is the Glu472. The segment at 595-629 (LRRTGPHDPLGGASSLGEATEPDPLRARRQPSADG) is disordered.

It belongs to the peptidase M14 family. Zn(2+) is required as a cofactor. As to expression, in placenta, it is present within invasive trophoblasts and in the surrounding extracellular space. Also present in amnion cells, but is not readily apparent in the extracellular matrix of this cell type. Present in normal pituitary gland and neoplastic pituitary gland (especially POMC-, GH- and PRL-producing adenomas) (at protein level). Widely expressed.

It localises to the secreted. The protein resides in the extracellular space. The protein localises to the extracellular matrix. Inhibited by 2-mercaptomethyl-3-guanidinoethylthiopropanoic acid (MGTA) and guanidinoethylmercaptosuccinic acid (GEMSA). Inhibited by chelating agents such as EDTA and EGTA. In terms of biological role, cleaves substrates with C-terminal arginine residues. Probably modulates the Wnt signaling pathway, by cleaving some undefined protein. May play a role in cleavage during prohormone processing. This is Carboxypeptidase Z (CPZ) from Homo sapiens (Human).